The sequence spans 423 residues: Phosphoribosylamine--glycine ligase (423 aa).

Residues 107–314 (KAFMAKYNIP…LSDLVEAAID (208 aa)) form the ATP-grasp domain. 133-194 (VNQKGAPIVI…EDFLQGEEAS (62 aa)) is an ATP binding site. Residues Glu284 and Asn286 each contribute to the Mg(2+) site.

This sequence belongs to the GARS family. It depends on Mg(2+) as a cofactor. Mn(2+) serves as cofactor.

It carries out the reaction 5-phospho-beta-D-ribosylamine + glycine + ATP = N(1)-(5-phospho-beta-D-ribosyl)glycinamide + ADP + phosphate + H(+). It participates in purine metabolism; IMP biosynthesis via de novo pathway; N(1)-(5-phospho-D-ribosyl)glycinamide from 5-phospho-alpha-D-ribose 1-diphosphate: step 2/2. In Neisseria meningitidis serogroup A / serotype 4A (strain DSM 15465 / Z2491), this protein is Phosphoribosylamine--glycine ligase.